The sequence spans 88 residues: Antitoxin VapB3 (88 aa).

Antitoxin component of a type II toxin-antitoxin (TA) system. This Mycobacterium tuberculosis (strain CDC 1551 / Oshkosh) protein is Antitoxin VapB3 (vapB3).